A 282-amino-acid chain; its full sequence is Undecaprenyl-diphosphatase (282 aa).

7 consecutive transmembrane segments (helical) span residues 40–60 (GAAF…IYFY), 87–107 (MGWM…LFKT), 116–136 (LYWI…AEWL), 153–173 (IGWK…IPGS), 196–216 (FSFL…LYET), 229–249 (NLAV…AFLI), and 256–276 (STAL…GLIA).

It belongs to the UppP family.

Its subcellular location is the cell inner membrane. It carries out the reaction di-trans,octa-cis-undecaprenyl diphosphate + H2O = di-trans,octa-cis-undecaprenyl phosphate + phosphate + H(+). Catalyzes the dephosphorylation of undecaprenyl diphosphate (UPP). Confers resistance to bacitracin. This is Undecaprenyl-diphosphatase from Chlorobium phaeobacteroides (strain BS1).